The chain runs to 1368 residues: Indole-3-acetaldehyde oxidase (1368 aa).

Residues 19 to 108 form the 2Fe-2S ferredoxin-type domain; that stretch reads TSLVFAINGQ…GCSITTSDGL (90 aa). The [2Fe-2S] cluster site is built by cysteine 60, cysteine 65, and cysteine 68. The FAD-binding PCMH-type domain occupies 246-427; sequence LHSRKYRWSS…LSLEIPSWHS (182 aa).

This sequence belongs to the xanthine dehydrogenase family. In terms of assembly, aldehyde oxidases (AO) are homodimers and heterodimers of AO subunits. AO-alpha is an AAO1 homodimer; AO-beta is an AAO1-AAO2 heterodimer. Requires [2Fe-2S] cluster as cofactor. The cofactor is FAD. Mo-molybdopterin serves as cofactor. As to expression, predominantly expressed in roots, seedlings, mature siliques and seeds, and to lower extent in stems and rosettes. In seedlings, mostly expressed in lower part of hypocotyls and roots.

The protein resides in the cytoplasm. It catalyses the reaction indole-3-acetaldehyde + O2 + H2O = (indol-3-yl)acetate + H2O2 + H(+). Strongly inhibited by iodoacetate and potassium cyanide (KCN). Weakly inhibited by 2-mercaptoethanol, dithiothreitol (DTT), menadione, estradiol, 4'-(9-acridinylamino)methanesulfon-m-anisidine (mAMSA), allopurinol and tritonX-100. Not affected by p-chloromercuribenzoate. In higher plants aldehyde oxidases (AO) appear to be homo- and heterodimeric assemblies of AO subunits with probably different physiological functions. AO-alpha may be involved in the biosynthesis of auxin, and in biosynthesis of abscisic acid (ABA) in seeds. In vitro, AO-alpha uses heptaldehyde, protocatechualdehyde, benzaldehyde, indole-3-aldehyde (IAld), indole-3-acetaldehyde (IAAld), cinnamaldehyde and citral as substrates; AO-beta uses IAAld, IAld and naphtaldehyde as substrates. This is Indole-3-acetaldehyde oxidase (AAO1) from Arabidopsis thaliana (Mouse-ear cress).